We begin with the raw amino-acid sequence, 570 residues long: Sulfite reductase [NADPH] hemoprotein beta-component (570 aa).

4 residues coordinate [4Fe-4S] cluster: C434, C440, C479, and C483. C483 serves as a coordination point for siroheme.

Belongs to the nitrite and sulfite reductase 4Fe-4S domain family. As to quaternary structure, alpha(8)-beta(8). The alpha component is a flavoprotein, the beta component is a hemoprotein. It depends on siroheme as a cofactor. The cofactor is [4Fe-4S] cluster.

The catalysed reaction is hydrogen sulfide + 3 NADP(+) + 3 H2O = sulfite + 3 NADPH + 4 H(+). It participates in sulfur metabolism; hydrogen sulfide biosynthesis; hydrogen sulfide from sulfite (NADPH route): step 1/1. Functionally, component of the sulfite reductase complex that catalyzes the 6-electron reduction of sulfite to sulfide. This is one of several activities required for the biosynthesis of L-cysteine from sulfate. This is Sulfite reductase [NADPH] hemoprotein beta-component from Salmonella dublin (strain CT_02021853).